We begin with the raw amino-acid sequence, 611 residues long: Chaperone protein DnaK (611 aa).

Position 173 is a phosphothreonine; by autocatalysis (Thr-173). Residues 577 to 592 show a composition bias toward low complexity; the sequence is QAAAGQAEGAEGAQDA. The disordered stretch occupies residues 577 to 598; the sequence is QAAAGQAEGAEGAQDAGAKKDN.

This sequence belongs to the heat shock protein 70 family.

Its function is as follows. Acts as a chaperone. In Bacillus anthracis (strain A0248), this protein is Chaperone protein DnaK.